The primary structure comprises 267 residues: Integral membrane protein 2C (267 aa).

Phosphothreonine is present on Thr37. A helical; Signal-anchor for type II membrane protein transmembrane segment spans residues 55 to 75 (VGGVCYLSMGMVVLLMGLVFA). Residues 136–230 (FGGGDPADII…LCNGKDTYRL (95 aa)) enclose the BRICHOS domain. Cys163 and Cys222 are joined by a disulfide. An N-linked (GlcNAc...) asparagine glycan is attached at Asn169.

It belongs to the ITM2 family. Interacts with BACE1. Interacts with APP. Interacts with STMN2. Type I membrane-bound, as well as soluble, furin has a pre-eminent role in ITM2C proteolytic processing. PCSK7 and PCSK5 may also be involved although to a lesser extent. The soluble form of PCSK7 is incapable of processing ITM2C. Fails to undergo shedding by ADAM10 and intramembrane cleavage by SPPL2B. As to expression, high levels in the brain, specifically in the cerebral cortex, medulla, amygdala, hippocampus, thalamus, caudate nucleus, cerebellum, olfactory lobe and spinal cord. Very low levels in other organs.

Its subcellular location is the lysosome membrane. The protein localises to the cell membrane. Its function is as follows. Negative regulator of amyloid-beta peptide production. May inhibit the processing of APP by blocking its access to alpha- and beta-secretase. Binding to the beta-secretase-cleaved APP C-terminal fragment is negligible, suggesting that ITM2C is a poor gamma-secretase cleavage inhibitor. May play a role in TNF-induced cell death and neuronal differentiation. This chain is Integral membrane protein 2C (ITM2C), found in Homo sapiens (Human).